Reading from the N-terminus, the 375-residue chain is Alanine racemase (375 aa).

The active-site Proton acceptor; specific for D-alanine is K35. At K35 the chain carries N6-(pyridoxal phosphate)lysine. Residue R133 coordinates substrate. Y261 functions as the Proton acceptor; specific for L-alanine in the catalytic mechanism. M309 provides a ligand contact to substrate.

The protein belongs to the alanine racemase family. Requires pyridoxal 5'-phosphate as cofactor.

It catalyses the reaction L-alanine = D-alanine. It functions in the pathway amino-acid biosynthesis; D-alanine biosynthesis; D-alanine from L-alanine: step 1/1. Its function is as follows. Catalyzes the interconversion of L-alanine and D-alanine. May also act on other amino acids. The sequence is that of Alanine racemase (alr) from Syntrophobacter fumaroxidans (strain DSM 10017 / MPOB).